Reading from the N-terminus, the 1151-residue chain is uncharacterized protein (1151 aa).

5 disordered regions span residues 611–633 (FVKG…DEEE), 709–740 (NLVP…IMEV), 753–778 (PPIL…KSIL), 795–880 (PPVI…PPKL), and 1060–1151 (LKEP…TQQE). 2 stretches are compositionally biased toward pro residues: residues 754-773 (PILP…PQEP) and 811-842 (IVPP…PSQP). Residues 867–878 (PITPDTPAITPP) show a composition bias toward low complexity. Residues 1082 to 1091 (ESDNEDDELD) are compositionally biased toward acidic residues. Residues 1131-1142 (PVDTSDATKIST) show a composition bias toward polar residues.

This is an uncharacterized protein from Ostreid herpesvirus 1 (isolate France) (OsHV-1).